Here is a 139-residue protein sequence, read N- to C-terminus: uncharacterized protein (139 aa).

A disordered region spans residues 54–75 (NSLHRHGDQAWGKHRRQNSLKS).

This is an uncharacterized protein from Homo sapiens (Human).